Consider the following 231-residue polypeptide: NADH-quinone oxidoreductase subunit C (231 aa).

It belongs to the complex I 30 kDa subunit family. In terms of assembly, NDH-1 is composed of 14 different subunits. Subunits NuoB, C, D, E, F, and G constitute the peripheral sector of the complex.

It localises to the cell membrane. It carries out the reaction a quinone + NADH + 5 H(+)(in) = a quinol + NAD(+) + 4 H(+)(out). Its function is as follows. NDH-1 shuttles electrons from NADH, via FMN and iron-sulfur (Fe-S) centers, to quinones in the respiratory chain. The immediate electron acceptor for the enzyme in this species is believed to be a menaquinone. Couples the redox reaction to proton translocation (for every two electrons transferred, four hydrogen ions are translocated across the cytoplasmic membrane), and thus conserves the redox energy in a proton gradient. This is NADH-quinone oxidoreductase subunit C from Mycobacterium sp. (strain JLS).